A 320-amino-acid chain; its full sequence is V-set and transmembrane domain-containing protein 4 (320 aa).

Residues 1-23 (MRLLALAAAALLARAPAPEVCAA) form the signal peptide. The Ig-like domain maps to 24-155 (LNVTVSPGPV…SSATEMRVIS (132 aa)). Residues 24–180 (LNVTVSPGPV…WAFFEDLYVY (157 aa)) lie on the Extracellular side of the membrane. Residues Asn-25, Asn-41, Asn-89, and Asn-144 are each glycosylated (N-linked (GlcNAc...) asparagine). Cys-46 and Cys-127 are joined by a disulfide. The chain crosses the membrane as a helical span at residues 181 to 201 (AVLVCCVGILSILLFMLVIVW). The Cytoplasmic segment spans residues 202–320 (QSVFNKRKSR…AQILFEENKL (119 aa)).

Proteolytically cleaved to generate a bioactive peptide.

It localises to the secreted. Its subcellular location is the cell membrane. In terms of biological role, peptide Lv enhances L-type voltage-gated calcium channel (L-VGCC) currents in retinal photoreceptors. The chain is V-set and transmembrane domain-containing protein 4 (VSTM4) from Homo sapiens (Human).